The sequence spans 345 residues: Anthranilate phosphoribosyltransferase (345 aa).

5-phospho-alpha-D-ribose 1-diphosphate contacts are provided by residues Gly75, Gly78–Asp79, Ser83, Asn85–Thr88, Lys103–Ser111, and Gly115. Gly75 contacts anthranilate. Ser87 is a Mg(2+) binding site. Asn106 contacts anthranilate. Arg161 serves as a coordination point for anthranilate. Positions 219 and 220 each coordinate Mg(2+).

The protein belongs to the anthranilate phosphoribosyltransferase family. In terms of assembly, homodimer. The cofactor is Mg(2+).

The enzyme catalyses N-(5-phospho-beta-D-ribosyl)anthranilate + diphosphate = 5-phospho-alpha-D-ribose 1-diphosphate + anthranilate. Its pathway is amino-acid biosynthesis; L-tryptophan biosynthesis; L-tryptophan from chorismate: step 2/5. Functionally, catalyzes the transfer of the phosphoribosyl group of 5-phosphorylribose-1-pyrophosphate (PRPP) to anthranilate to yield N-(5'-phosphoribosyl)-anthranilate (PRA). This Nocardia farcinica (strain IFM 10152) protein is Anthranilate phosphoribosyltransferase.